Reading from the N-terminus, the 1203-residue chain is DNA-directed RNA polymerase subunit beta' (1203 aa).

Zn(2+)-binding residues include cysteine 60, cysteine 62, cysteine 75, and cysteine 78. Residues aspartate 449, aspartate 451, and aspartate 453 each contribute to the Mg(2+) site. 4 residues coordinate Zn(2+): cysteine 818, cysteine 892, cysteine 899, and cysteine 902.

The protein belongs to the RNA polymerase beta' chain family. In terms of assembly, the RNAP catalytic core consists of 2 alpha, 1 beta, 1 beta' and 1 omega subunit. When a sigma factor is associated with the core the holoenzyme is formed, which can initiate transcription. Requires Mg(2+) as cofactor. Zn(2+) is required as a cofactor.

It carries out the reaction RNA(n) + a ribonucleoside 5'-triphosphate = RNA(n+1) + diphosphate. Functionally, DNA-dependent RNA polymerase catalyzes the transcription of DNA into RNA using the four ribonucleoside triphosphates as substrates. In Bacillus mycoides (strain KBAB4) (Bacillus weihenstephanensis), this protein is DNA-directed RNA polymerase subunit beta'.